The following is a 400-amino-acid chain: Subtilisin-like protease 2 (400 aa).

The signal sequence occupies residues 1 to 20 (MKFSQSLIALAACFLPLIAA). Positions 21-119 (APEEAQHAKI…IERDGKVQAN (99 aa)) are excised as a propeptide. In terms of domain architecture, Inhibitor I9 spans 42-117 (SYIVVFNKGV…AWIERDGKVQ (76 aa)). N-linked (GlcNAc...) asparagine glycosylation occurs at asparagine 82. In terms of domain architecture, Peptidase S8 spans 128-400 (TWGLGRISHK…NLIAYNGNGA (273 aa)). Active-site charge relay system residues include aspartate 160, histidine 192, and serine 345.

Belongs to the peptidase S8 family.

The protein localises to the secreted. Its activity is regulated as follows. Potently inhibited by the serine peptidase inhibitor chymostatin. Also inhibited by antpain and PMSF. Its function is as follows. Major secreted subtilisin-like serine endopeptidase. Preferentially cleaves substrates containing hydrophobic residues at P4, positively charged residues at P3, small or flexible residues at P2, and large, bulky residues at P1. Mediates the degradation of collagen, the major structural protein in the mammalian host. Degrades the nonhelical regions of collagen that function in the cross-linking of the helical components. May function as virulence factor involved in epidermal wing necrosis observed in white nose syndrome (WNS) in bats. This Pseudogymnoascus destructans (strain ATCC MYA-4855 / 20631-21) (Bat white-nose syndrome fungus) protein is Subtilisin-like protease 2.